Reading from the N-terminus, the 185-residue chain is Peptidyl-tRNA hydrolase (185 aa).

Position 14 (Tyr14) interacts with tRNA. Residue His19 is the Proton acceptor of the active site. Phe64, Asn66, and Asn112 together coordinate tRNA.

It belongs to the PTH family. In terms of assembly, monomer.

The protein localises to the cytoplasm. The enzyme catalyses an N-acyl-L-alpha-aminoacyl-tRNA + H2O = an N-acyl-L-amino acid + a tRNA + H(+). Hydrolyzes ribosome-free peptidyl-tRNAs (with 1 or more amino acids incorporated), which drop off the ribosome during protein synthesis, or as a result of ribosome stalling. Its function is as follows. Catalyzes the release of premature peptidyl moieties from peptidyl-tRNA molecules trapped in stalled 50S ribosomal subunits, and thus maintains levels of free tRNAs and 50S ribosomes. This chain is Peptidyl-tRNA hydrolase, found in Lactobacillus gasseri (strain ATCC 33323 / DSM 20243 / BCRC 14619 / CIP 102991 / JCM 1131 / KCTC 3163 / NCIMB 11718 / NCTC 13722 / AM63).